The following is a 94-amino-acid chain: Pyrimidine/purine nucleoside phosphorylase (94 aa).

This sequence belongs to the nucleoside phosphorylase PpnP family.

It catalyses the reaction a purine D-ribonucleoside + phosphate = a purine nucleobase + alpha-D-ribose 1-phosphate. The catalysed reaction is adenosine + phosphate = alpha-D-ribose 1-phosphate + adenine. It carries out the reaction cytidine + phosphate = cytosine + alpha-D-ribose 1-phosphate. The enzyme catalyses guanosine + phosphate = alpha-D-ribose 1-phosphate + guanine. It catalyses the reaction inosine + phosphate = alpha-D-ribose 1-phosphate + hypoxanthine. The catalysed reaction is thymidine + phosphate = 2-deoxy-alpha-D-ribose 1-phosphate + thymine. It carries out the reaction uridine + phosphate = alpha-D-ribose 1-phosphate + uracil. The enzyme catalyses xanthosine + phosphate = alpha-D-ribose 1-phosphate + xanthine. Catalyzes the phosphorolysis of diverse nucleosides, yielding D-ribose 1-phosphate and the respective free bases. Can use uridine, adenosine, guanosine, cytidine, thymidine, inosine and xanthosine as substrates. Also catalyzes the reverse reactions. The sequence is that of Pyrimidine/purine nucleoside phosphorylase from Citrobacter koseri (strain ATCC BAA-895 / CDC 4225-83 / SGSC4696).